A 498-amino-acid chain; its full sequence is MKKRTNSRGTPTSSGDALLDTSFSSAGDAERDHPAYKSGAASAPATPTKRRDGSDGSVSSAGARRKRKDEIAQTFVIVNERPVDDISLDFFYKPHTITLLAVSVLAVMYFAFVRNEANVDENLWAGLLCIVFFFLIVSVIAFPNGPFTRPHPAVWRILFGCSVLYLLTLQFLMFQNYPTIRSIFYWIDPKLKNFHIDMEKEYGVNCSDISWDRVKGHLDVFAWGHFLGWAFKAILIRHMGILWAISVMWEITEITFAHLLPNFIECWWDALILDVIICNGLGIWMGLKICQILEMREYKWASIKDISTTTGKIKRAMLQFTPESWSAIRWLDPKSTAMRFAAVIQLVIFWQVTELNTFFLKHIFEMPPDHFIVIGRLIFIGLFVAPSVRQYYVYVTDTRCKRVGTQCWVYGAIMVSEAILCIKNGKELFERTQAINIVLWLTVQVIISVAFVYLAVYWQQRQLKKVSSTPAKTKETIPASSSSPSKGKLSPQKEKKLK.

Residues Met-1–Arg-65 are disordered. Residues Met-1–Tyr-92 lie on the Cytoplasmic side of the membrane. Residues Ser-7–Ser-25 show a composition bias toward polar residues. Residues Lys-93–Val-113 form a helical membrane-spanning segment. The Lumenal portion of the chain corresponds to Arg-114–Asn-122. Residues Leu-123–Pro-143 form a helical membrane-spanning segment. The Cytoplasmic portion of the chain corresponds to Asn-144–Ala-153. Residues Val-154–Phe-174 form a helical membrane-spanning segment. Residues Gln-175–Met-239 lie on the Lumenal side of the membrane. N-linked (GlcNAc...) asparagine glycosylation is present at Asn-205. The helical transmembrane segment at Gly-240–Leu-260 threads the bilayer. The Cytoplasmic segment spans residues Pro-261 to Cys-266. Residues Trp-267–Leu-287 form a helical membrane-spanning segment. At Lys-288–Arg-339 the chain is on the lumenal side. A helical transmembrane segment spans residues Phe-340–Leu-360. Residues Lys-361 to Pro-367 are Cytoplasmic-facing. A helical membrane pass occupies residues Pro-368–Val-388. Residues Arg-389 to Arg-402 lie on the Lumenal side of the membrane. Residues Val-403–Lys-423 form a helical membrane-spanning segment. The Cytoplasmic segment spans residues Asn-424–Asn-436. A helical transmembrane segment spans residues Ile-437–Tyr-457. The Lumenal segment spans residues Trp-458–Lys-498. Positions Lys-465–Lys-498 are disordered. The span at Pro-478 to Ser-490 shows a compositional bias: low complexity.

Belongs to the phosphatidyl serine synthase family.

Its subcellular location is the endoplasmic reticulum membrane. The catalysed reaction is a 1,2-diacyl-sn-glycero-3-phosphoethanolamine + L-serine = a 1,2-diacyl-sn-glycero-3-phospho-L-serine + ethanolamine. It participates in phospholipid metabolism; phosphatidylserine biosynthesis. Catalyzes a base-exchange reaction in which the polar head group of phosphatidylethanolamine (PE) is replaced by L-serine. The chain is Phosphatidylserine synthase from Drosophila melanogaster (Fruit fly).